We begin with the raw amino-acid sequence, 768 residues long: cGMP-dependent protein kinase, isozyme 1 (768 aa).

The segment at 1 to 192 is regulatory; sequence MAAGMLTDRE…NDFLKNIDAS (192 aa). The segment covering 114-127 has biased composition (low complexity); that stretch reads PLASTSSASPSGRT. The tract at residues 114-134 is disordered; sequence PLASTSSASPSGRTSADEVRP. Residues 249 to 252, 259 to 260, arginine 366, 375 to 378, 385 to 386, and tyrosine 421 contribute to the 3',5'-cyclic GMP site; these read GELA, RT, and GEQA. In terms of domain architecture, Protein kinase spans 457 to 717; the sequence is LEVVSTLGIG…IQDIKKHKWF (261 aa). ATP-binding positions include 463 to 471 and lysine 488; that span reads LGIGGFGRV. Aspartate 582 (proton acceptor) is an active-site residue. Positions 718–768 constitute an AGC-kinase C-terminal domain; the sequence is LGFDWDGLASQLLIPPFVRPIAHPTDVRYFDRFPCDLNEPPDELSGWDADF.

The protein belongs to the protein kinase superfamily. AGC Ser/Thr protein kinase family. cGMP subfamily. Homodimer. It depends on Mg(2+) as a cofactor. Post-translationally, autophosphorylated. As to expression, in embryo stage 13, expression is seen in a few large, irregular cells having the appearance of hemocytes or macrophages. In adults, expression is seen in optic lamina and weakly in testis.

It carries out the reaction L-seryl-[protein] + ATP = O-phospho-L-seryl-[protein] + ADP + H(+). It catalyses the reaction L-threonyl-[protein] + ATP = O-phospho-L-threonyl-[protein] + ADP + H(+). With respect to regulation, binding of cGMP results in enzyme activation. The polypeptide is cGMP-dependent protein kinase, isozyme 1 (Pkg21D) (Drosophila melanogaster (Fruit fly)).